The following is a 157-amino-acid chain: ATP synthase subunit b 1 (157 aa).

The helical transmembrane segment at 7-29 (LFGQMVTFALLVWFTMKYVWPPL) threads the bilayer.

The protein belongs to the ATPase B chain family. As to quaternary structure, F-type ATPases have 2 components, F(1) - the catalytic core - and F(0) - the membrane proton channel. F(1) has five subunits: alpha(3), beta(3), gamma(1), delta(1), epsilon(1). F(0) has three main subunits: a(1), b(2) and c(10-14). The alpha and beta chains form an alternating ring which encloses part of the gamma chain. F(1) is attached to F(0) by a central stalk formed by the gamma and epsilon chains, while a peripheral stalk is formed by the delta and b chains.

The protein resides in the cell inner membrane. F(1)F(0) ATP synthase produces ATP from ADP in the presence of a proton or sodium gradient. F-type ATPases consist of two structural domains, F(1) containing the extramembraneous catalytic core and F(0) containing the membrane proton channel, linked together by a central stalk and a peripheral stalk. During catalysis, ATP synthesis in the catalytic domain of F(1) is coupled via a rotary mechanism of the central stalk subunits to proton translocation. Functionally, component of the F(0) channel, it forms part of the peripheral stalk, linking F(1) to F(0). This Methylococcus capsulatus (strain ATCC 33009 / NCIMB 11132 / Bath) protein is ATP synthase subunit b 1.